The following is a 478-amino-acid chain: MSGHKCYSWELQDRFAQDKSVVNKMQQKYWETKQAFIKATGKKEDEHVVASDADLDAKLELFHSIQRTCLDLSKAIVLYQKRICFLSQEENELGKFLRSQGFQDKTRAGKMMQATGKALCFSSQQRLALRNPLCRFHQEVETFRHRAISDTWLTVNRMEQYRTEYRGALLWMKDVSQELDPDLYKQMEKFRKVQTQVRLAKKNFDKLKMDVCQKVDLLGASRCNLLSHMLATYQTTLLHFWEKTSHTMAAIHESFKGYQPYEFTTLKSLQDPMKKLVEKEGKKTSWRENREAVAPEPRQLISLEDEHKDSSAYKTEEGTSVLSSVDKGSVHDTCSGPIDELLDGKPEEACLGPTAGTPEPESGDKDDLLLLNEIFSTSCLDEGEFSREWAAVFGDDQLKEPAPMGAQGEPDPKPQIGSGFLPSQLLDQNMKDLQASLQEPAKAASDLTAWFSLFADLDPLSNPDAVGKTDKEHELLNA.

In terms of domain architecture, AH spans 50–253 (ASDADLDAKL…TSHTMAAIHE (204 aa)). Residues 306–317 (EHKDSSAYKTEE) show a composition bias toward basic and acidic residues. 2 disordered regions span residues 306–365 (EHKD…SGDK) and 398–422 (LKEP…GFLP).

Predominantly expressed in brain, pancreas and stomach mucosa. High expression also found in stomach muscle and testis.

It localises to the cytoplasm. It is found in the cytosol. The protein localises to the golgi apparatus membrane. Its subcellular location is the cytoplasmic vesicle. The protein resides in the secretory vesicle membrane. It localises to the secretory vesicle. It is found in the synaptic vesicle membrane. Functionally, may play a role in neurotransmitter secretion. In Mus musculus (Mouse), this protein is Islet cell autoantigen 1.